We begin with the raw amino-acid sequence, 318 residues long: Cuticle collagen dpy-7 (318 aa).

Triple-helical region regions lie at residues 101–130 (GPIG…DGLD), 147–206 (GPPG…PGDD), 209–235 (GGTG…NGLP), and 240–278 (GPPG…PGGH). Positions 101-318 (GPIGPPGVSG…GYSGGGYGKK (218 aa)) are disordered. A compositionally biased stretch (low complexity) spans 187–204 (PQGEPGEQGEPGIKGPPG). Pro residues-rich tracts occupy residues 216 to 228 (PPGP…PKGP) and 250 to 268 (PPGP…PFGP). Gly residues predominate over residues 309-318 (GYSGGGYGKK).

The protein belongs to the cuticular collagen family. Collagen polypeptide chains are complexed within the cuticle by disulfide bonds and other types of covalent cross-links.

Functionally, nematode cuticles are composed largely of collagen-like proteins. The cuticle functions both as an exoskeleton and as a barrier to protect the worm from its environment. Mutations in dpy-7 affects the body shape. This chain is Cuticle collagen dpy-7 (dpy-7), found in Caenorhabditis elegans.